Consider the following 159-residue polypeptide: Probable minor fimbrial protein (159 aa).

Residues 1-6 (MKKMHG) constitute a propeptide, leader sequence. The residue at position 7 (phenylalanine 7) is an N-methylphenylalanine. A helical membrane pass occupies residues 7–27 (FTLIELMIVVAIIGVLASTAL). 2 cysteine pairs are disulfide-bonded: cysteine 56–cysteine 71 and cysteine 140–cysteine 153.

This sequence belongs to the N-Me-Phe pilin family. In terms of assembly, the pili are polar flexible filaments of about 5.4 nanometers diameter and 2.5 micrometers average length; they consist of only a single polypeptide chain arranged in a helical configuration of five subunits per turn in the assembled pilus.

It localises to the fimbrium. The protein resides in the membrane. The protein is Probable minor fimbrial protein (fimZ) of Dichelobacter nodosus (Bacteroides nodosus).